Here is a 974-residue protein sequence, read N- to C-terminus: Collagen alpha-1(I) chain (974 aa).

Positions 1–14 (GISVPGPMGPSGPR) are enriched in low complexity. The disordered stretch occupies residues 1 to 974 (GISVPGPMGP…PGPPGPPGPP (974 aa)). 4-hydroxyproline is present on residues proline 17, proline 20, proline 23, proline 32, proline 35, proline 38, proline 53, proline 68, proline 75, and proline 81. The span at 25-44 (PQGFQGPPGEPGEPGASGPM) shows a compositional bias: low complexity. Residues 56-73 (NGDDGEAGKPGRPGERRG) show a composition bias toward basic and acidic residues. Lysine 84 is modified (5-hydroxylysine; alternate). O-linked (Gal...) hydroxylysine; alternate glycosylation is present at lysine 84. A Phosphoserine modification is found at serine 90. A compositionally biased stretch (low complexity) spans 98-114 (DAGPAGPKGEPGSPGEN). Residues proline 108, proline 111, proline 117, proline 126, proline 132, proline 153, proline 162, proline 165, proline 192, proline 195, proline 207, proline 213, proline 222, proline 228, proline 231, and proline 245 each carry the 4-hydroxyproline modification. Over residues 132–150 (PGASGPAGARGNDGATGAA) the composition is skewed to low complexity. Residues 152–164 (PPGPTGPAGPPGF) show a composition bias toward pro residues. Residues 198-228 (AGAAGPAGNPGADGQPGAKGANGAPGIAGAP) are compositionally biased toward low complexity. The residue at position 248 (lysine 248) is a 5-hydroxylysine. Proline 254, proline 257, proline 269, proline 278, proline 293, proline 299, proline 308, and proline 314 each carry 4-hydroxyproline. Residues 303-312 (GERGGPGSRG) show a composition bias toward gly residues. Lysine 323 carries the 5-hydroxylysine modification. 4-hydroxyproline is present on residues proline 328, proline 337, proline 343, proline 349, proline 358, proline 361, proline 370, proline 379, proline 385, proline 397, proline 406, proline 415, proline 418, proline 436, proline 454, proline 460, proline 466, proline 472, proline 484, proline 493, proline 505, proline 520, proline 527, and proline 536. Low complexity predominate over residues 352–378 (KGLTGSPGSPGPDGKTGPPGPAGQDGR). Low complexity predominate over residues 387–406 (ARGQAGVMGFPGPKGAAGEP). Over residues 504–517 (APGNDGAKGDAGAP) the composition is skewed to low complexity. Lysine 548 carries the 5-hydroxylysine modification. Residues proline 554, proline 569, and proline 575 each carry the 4-hydroxyproline modification. Residues 581–595 (SGPSGPAGPTGARGA) are compositionally biased toward low complexity. The residue at position 584 (serine 584) is a Phosphoserine. 4-hydroxyproline is present on residues proline 596, proline 602, proline 605, proline 614, proline 620, proline 638, proline 647, and proline 656. A compositionally biased stretch (low complexity) spans 608–635 (AGFAGPPGADGQPGAKGEPGDAGAKGDA). Positions 637-649 (PPGPAGPTGPPGP) are enriched in pro residues. At lysine 659 the chain carries 5-hydroxylysine. The span at 664–680 (SAGPPGATGFPGAAGRV) shows a compositional bias: low complexity. A 4-hydroxyproline mark is found at proline 668 and proline 674. Position 682 is a 3-hydroxyproline (proline 682). Proline 683, proline 692, proline 695, proline 716, proline 725, proline 733, proline 742, proline 760, proline 769, proline 772, proline 778, proline 793, proline 799, proline 805, proline 814, and proline 820 each carry 4-hydroxyproline. Residues 709-718 (ETGPAGRPGE) show a composition bias toward low complexity. A compositionally biased stretch (low complexity) spans 730–742 (KGSPGADGPAGAP). Over residues 792 to 802 (PPGPVGPPGLA) the composition is skewed to pro residues. The segment covering 804-826 (PPGESGREGSPGAEGSPGRDGSP) has biased composition (low complexity). A compositionally biased stretch (pro residues) spans 828-844 (PKGPPGAPGAPGAPGPV). Lysine 829 carries the 5-hydroxylysine modification. 4-hydroxyproline is present on residues proline 832, proline 835, and proline 838. The segment covering 865-879 (AGPAGARGPAGPQGP) has biased composition (low complexity). Basic and acidic residues predominate over residues 880-894 (RGDKGETGEQGDRRG). Lysine 883 is subject to 5-hydroxylysine. 4 positions are modified to 4-hydroxyproline: proline 905, proline 908, proline 926, and proline 941. Over residues 908-941 (PGEQGPSGASGPAGPRGPPGSAGSPGKDGLNGLP) the composition is skewed to low complexity. The residue at position 946 (proline 946) is a 3-hydroxyproline. Proline 947 bears the 4-hydroxyproline mark. The segment covering 959 to 974 (VGPPGPPGPPGPPGPP) has biased composition (pro residues). Proline 961 is modified (3-hydroxyproline). The residue at position 962 (proline 962) is a 4-hydroxyproline. Proline 964 is subject to 3-hydroxyproline. Proline 965 is modified (4-hydroxyproline). Proline 967 bears the 3-hydroxyproline mark. Proline 968, proline 971, and proline 974 each carry 4-hydroxyproline.

This sequence belongs to the fibrillar collagen family. As to quaternary structure, trimers of one alpha 2(I) and two alpha 1(I) chains. Post-translationally, contains mostly 4-hydroxyproline. Proline residues at the third position of the tripeptide repeating unit (G-X-Y) are hydroxylated in some or all of the chains. In terms of processing, contains 3-hydroxyproline at a few sites. This modification occurs on the first proline residue in the sequence motif Gly-Pro-Hyp, where Hyp is 4-hydroxyproline. Lysine residues at the third position of the tripeptide repeating unit (G-X-Y) are 5-hydroxylated in some or all of the chains. Post-translationally, O-glycosylated on hydroxylated lysine residues. The O-linked glycan consists of a Glc-Gal disaccharide. Expressed in bones.

It is found in the secreted. The protein resides in the extracellular space. It localises to the extracellular matrix. Its function is as follows. Type I collagen is a member of group I collagen (fibrillar forming collagen). The chain is Collagen alpha-1(I) chain from Scelidodon sp. (strain SLP-2019) (South American ground sloth).